A 274-amino-acid polypeptide reads, in one-letter code: MRVALGVSYNGQAYNGWQSQPSANTVQDRLEAALGRFATQEVHTICAGRTDAGVHGLMQVVHFDTELQRAPFSWVRGTNTFLPADIAVQWAQPVPDAFHSRACAVARRYAYVLLQSPVRPSVDAGRVGWVFHALDEQAMHKAVQHLLGEHDFTSFRASACQAKSPVKTLHRIDITRRAPPAGESTGTHGCVPCYWRFEFEGNAFLHHMIRNIMGCIVAIGQGLYPPEWMRTVLEARSRDAAAPTFSPDGLYFQGPVYGAEWGLPTRTAAYDWLP.

Asp-51 acts as the Nucleophile in catalysis. Residue Tyr-109 participates in substrate binding.

This sequence belongs to the tRNA pseudouridine synthase TruA family. Homodimer.

It carries out the reaction uridine(38/39/40) in tRNA = pseudouridine(38/39/40) in tRNA. Functionally, formation of pseudouridine at positions 38, 39 and 40 in the anticodon stem and loop of transfer RNAs. This is tRNA pseudouridine synthase A from Acidovorax sp. (strain JS42).